Here is a 976-residue protein sequence, read N- to C-terminus: Vacuolar membrane protease (976 aa).

Topologically, residues 1–15 (MKLKSVFRSVLKYRK) are cytoplasmic. A helical transmembrane segment spans residues 16–36 (TNLSLLLLITYSIITLLYIFD). Over 37–359 (HERYKLNLPK…KFFVISAKTL (323 aa)) the chain is Vacuolar. N-linked (GlcNAc...) asparagine glycans are attached at residues Asn96 and Asn121. Zn(2+) is bound by residues His156 and Asp168. An N-linked (GlcNAc...) asparagine glycan is attached at Asn189. Glu200 acts as the Proton acceptor in catalysis. Residue Glu201 coordinates Zn(2+). 2 N-linked (GlcNAc...) asparagine glycosylation sites follow: Asn212 and Asn217. Residues Glu226 and His300 each coordinate Zn(2+). The helical transmembrane segment at 360 to 380 (FYWNCIFLLVSPVVAIGLYLI) threads the bilayer. Topologically, residues 381 to 392 (SRDRMTWKSHSW) are cytoplasmic. Residues 393–412 (LSWTRFPLSLAAGIIVQKLF) traverse the membrane as a helical segment. Residues 413-428 (SNDIIRSNPLTFSRNY) are Vacuolar-facing. A helical membrane pass occupies residues 429-449 (FWPISAFFTQVIFTSYVLINC). Residues 450-461 (SNFFFPCADMKS) are Cytoplasmic-facing. The helical transmembrane segment at 462 to 482 (LSIIELFIILWTILLFTSKLL) threads the bilayer. The Vacuolar portion of the chain corresponds to 483-496 (YSSDYRYTGLYPLS). A helical transmembrane segment spans residues 497 to 517 (IFFLLSTIAAILRLLALALGM). Over 518-627 (RTRKRLGREC…NSLKLEYTDY (110 aa)) the chain is Cytoplasmic. The segment at 528–610 (RDHHSNYSSH…PLLKGSNSME (83 aa)) is disordered. The span at 549-558 (NLEQPQDQFT) shows a compositional bias: polar residues. Low complexity predominate over residues 559 to 570 (SSQDDQASIQDD). The span at 582 to 601 (NVDEDHGMDSSSQQHDERVP) shows a compositional bias: basic and acidic residues. A helical membrane pass occupies residues 628–648 (AWIIQFLLIVPIPSFILFNSV). Residues 649–668 (DVIMDALNHTVQEGSKATFD) lie on the Vacuolar side of the membrane. N-linked (GlcNAc...) asparagine glycosylation is present at Asn656. The chain crosses the membrane as a helical span at residues 669–689 (VLRFGMVGSILMALPILPFFY). The Cytoplasmic segment spans residues 690 to 692 (KVN). Residues 693–713 (YITISLTALLFLISASKTLLV) traverse the membrane as a helical segment. At 714-976 (HPFTNSNPLK…LVIVKDAIIL (263 aa)) the chain is on the vacuolar side. N-linked (GlcNAc...) asparagine glycans are attached at residues Asn768, Asn796, Asn811, Asn866, and Asn937.

This sequence belongs to the peptidase M28 family. Requires Zn(2+) as cofactor.

The protein resides in the vacuole membrane. Its function is as follows. May be involved in vacuolar sorting and osmoregulation. The chain is Vacuolar membrane protease from Saccharomyces cerevisiae (strain YJM789) (Baker's yeast).